Consider the following 643-residue polypeptide: Threonine--tRNA ligase (643 aa).

Positions 1-61 constitute a TGS domain; sequence MPIITLPDGS…EQDATLEIIT (61 aa). Residues 243-534 form a catalytic region; the sequence is DHRKIGKALD…ITEEYAGFFP (292 aa). The Zn(2+) site is built by Cys334, His385, and His511.

Belongs to the class-II aminoacyl-tRNA synthetase family. As to quaternary structure, homodimer. The cofactor is Zn(2+).

The protein resides in the cytoplasm. It catalyses the reaction tRNA(Thr) + L-threonine + ATP = L-threonyl-tRNA(Thr) + AMP + diphosphate + H(+). Functionally, catalyzes the attachment of threonine to tRNA(Thr) in a two-step reaction: L-threonine is first activated by ATP to form Thr-AMP and then transferred to the acceptor end of tRNA(Thr). Also edits incorrectly charged L-seryl-tRNA(Thr). This is Threonine--tRNA ligase from Haemophilus influenzae (strain PittEE).